The following is a 437-amino-acid chain: Protein arginine methyltransferase NDUFAF7 homolog, mitochondrial (437 aa).

The interval 21 to 49 is disordered; it reads RPNLGATGTPKMEPPKEQPEASSKAESGH.

This sequence belongs to the NDUFAF7 family.

It localises to the mitochondrion. It carries out the reaction L-arginyl-[protein] + 2 S-adenosyl-L-methionine = N(omega),N(omega)'-dimethyl-L-arginyl-[protein] + 2 S-adenosyl-L-homocysteine + 2 H(+). In terms of biological role, arginine methyltransferase involved in the assembly or stability of mitochondrial NADH:ubiquinone oxidoreductase complex (complex I). This Drosophila melanogaster (Fruit fly) protein is Protein arginine methyltransferase NDUFAF7 homolog, mitochondrial.